Reading from the N-terminus, the 563-residue chain is Putative ABC transporter ATP-binding protein SCO2324 (563 aa).

In terms of domain architecture, ABC transporter 1 spans 2-243 (IRFEDVSVTY…SPVYPPVVGL (242 aa)). 36–43 (GPSGVGKS) provides a ligand contact to ATP. Positions 271-317 (AGREIPDHTPPPSAPLPAPPAPRPVTSRWRRRGKRPENPSAPTPYAA) are disordered. Residues 278–293 (HTPPPSAPLPAPPAPR) show a composition bias toward pro residues. One can recognise an ABC transporter 2 domain in the interval 317–545 (AEVRSLAVRR…SPSYAPQVAK (229 aa)). 349–356 (GRNGAGKS) is a binding site for ATP.

This sequence belongs to the ABC transporter superfamily.

The protein localises to the cell membrane. Probably part of an ABC transporter complex. Responsible for energy coupling to the transport system. The protein is Putative ABC transporter ATP-binding protein SCO2324 of Streptomyces coelicolor (strain ATCC BAA-471 / A3(2) / M145).